Here is a 523-residue protein sequence, read N- to C-terminus: Probable 3-ketoacyl-CoA synthase 20 (523 aa).

A run of 2 helical transmembrane segments spans residues 31-55 (IVAV…AAGG) and 78-96 (ALAV…YAAS). Residues 93–382 (YAASRPRPVY…RFLATVVLKR (290 aa)) enclose the FAE domain. Active-site residues include Cys237, His317, His401, His405, and Asn438.

The protein belongs to the thiolase-like superfamily. Chalcone/stilbene synthases family. In terms of tissue distribution, highly expressed in leaf sheaths. Expressed in leaves, flag leaves and panicles.

It is found in the membrane. The enzyme catalyses a very-long-chain acyl-CoA + malonyl-CoA + H(+) = a very-long-chain 3-oxoacyl-CoA + CO2 + CoA. In terms of biological role, contributes to fatty acids elongation. Plays a role in controlling leaf anatomy and plant architecture. This chain is Probable 3-ketoacyl-CoA synthase 20, found in Oryza sativa subsp. japonica (Rice).